The primary structure comprises 443 residues: Phosphoglucosamine mutase (443 aa).

Ser-101 (phosphoserine intermediate) is an active-site residue. Positions 101, 239, 241, and 243 each coordinate Mg(2+). Ser-101 carries the post-translational modification Phosphoserine.

The protein belongs to the phosphohexose mutase family. Mg(2+) is required as a cofactor. In terms of processing, activated by phosphorylation.

The enzyme catalyses alpha-D-glucosamine 1-phosphate = D-glucosamine 6-phosphate. Functionally, catalyzes the conversion of glucosamine-6-phosphate to glucosamine-1-phosphate. In Francisella tularensis subsp. holarctica (strain FTNF002-00 / FTA), this protein is Phosphoglucosamine mutase.